The primary structure comprises 425 residues: UDP-N-acetylglucosamine 1-carboxyvinyltransferase (425 aa).

Phosphoenolpyruvate is bound at residue 22-23 (KN). Arg93 is a UDP-N-acetyl-alpha-D-glucosamine binding site. Residue Asp117 is the Proton donor of the active site. Residues Asp312 and Met334 each coordinate UDP-N-acetyl-alpha-D-glucosamine.

It belongs to the EPSP synthase family. MurA subfamily.

The protein localises to the cytoplasm. The catalysed reaction is phosphoenolpyruvate + UDP-N-acetyl-alpha-D-glucosamine = UDP-N-acetyl-3-O-(1-carboxyvinyl)-alpha-D-glucosamine + phosphate. It participates in cell wall biogenesis; peptidoglycan biosynthesis. Functionally, cell wall formation. Adds enolpyruvyl to UDP-N-acetylglucosamine. The polypeptide is UDP-N-acetylglucosamine 1-carboxyvinyltransferase (Treponema pallidum (strain Nichols)).